An 87-amino-acid chain; its full sequence is Toxin RelG (87 aa).

Belongs to the RelE toxin family. Interacts with cognate antitoxin RelF, which neutralizes the toxin. Also interacts with non-cognate antitoxin RelB in vitro, in M.smegmatis this neutralizes the toxicity of this toxin.

Its function is as follows. Toxic component of a type II toxin-antitoxin (TA) system. Has RNase activity and preferentially cleaves at the 3'-end of purine ribonucleotides. Overexpression in M.tuberculosis or M.smegmatis inhibits colony formation in a bacteriostatic rather than bacteriocidal fashion. Its toxic effect is neutralized by coexpression with cognate antitoxin RelB2 (shown only for M.smegmatis). Overexpression also increases the number of gentamicin-tolerant and levofloxacin-tolerant persister cells. Functionally, in combination with cognate antitoxin RelF represses its own promoter. Has been seen to bind DNA in complex with antitoxin RelF but not alone. This chain is Toxin RelG (relG), found in Mycobacterium tuberculosis (strain ATCC 25618 / H37Rv).